Reading from the N-terminus, the 545-residue chain is Lysine--tRNA ligase (545 aa).

The 'HIGH' region signature appears at 41–49 (PSGVPHLGH). The short motif at 306–310 (ALSSS) is the 'KMSKS' region element.

It belongs to the class-I aminoacyl-tRNA synthetase family.

The protein localises to the cytoplasm. The catalysed reaction is tRNA(Lys) + L-lysine + ATP = L-lysyl-tRNA(Lys) + AMP + diphosphate. The sequence is that of Lysine--tRNA ligase from Natronomonas pharaonis (strain ATCC 35678 / DSM 2160 / CIP 103997 / JCM 8858 / NBRC 14720 / NCIMB 2260 / Gabara) (Halobacterium pharaonis).